A 454-amino-acid chain; its full sequence is Growth/differentiation factor 6 (454 aa).

Residues 1–22 form the signal peptide; it reads MDTPRVLLWAIFLISFLWDLPG. A propeptide spanning residues 23 to 334 is cleaved from the precursor; the sequence is FQQASISSSS…LPSPGRRRRR (312 aa). The interval 28-93 is disordered; that stretch reads ISSSSSSSTE…QGQEPPGRGL (66 aa). Basic and acidic residues-rich tracts occupy residues 39–52 and 60–73; these read DSTK…EGKM and AEGR…LRQK. Positions 81–92 are enriched in low complexity; the sequence is GQHQGQEPPGRG. Asparagine 117 carries an N-linked (GlcNAc...) asparagine glycan. 2 disordered regions span residues 247 to 268 and 303 to 350; these read DTGA…SLGF and AEAA…KKSR. Positions 303–319 are enriched in low complexity; it reads AEAAGAEGSWPAPSGSP. Over residues 329 to 350 the composition is skewed to basic residues; that stretch reads GRRRRRTAFASRHGKRHGKKSR. Cystine bridges form between cysteine 353/cysteine 419, cysteine 382/cysteine 451, and cysteine 386/cysteine 453.

The protein belongs to the TGF-beta family. In terms of assembly, homodimer; disulfide-linked. Expressed in different subsets of developing joints. Highly expressed in the cochlea.

It is found in the secreted. Functionally, growth factor that controls proliferation and cellular differentiation in the retina and bone formation. Plays a key role in regulating apoptosis during retinal development. Establishes dorsal-ventral positional information in the retina and controls the formation of the retinotectal map. Required for normal formation of bones and joints in the limbs, skull, digits and axial skeleton. Plays a key role in establishing boundaries between skeletal elements during development. Regulation of GDF6 expression seems to be a mechanism for evolving species-specific changes in skeletal structures. Seems to positively regulate differentiation of chondrogenic tissue through the growth factor receptors subunits BMPR1A, BMPR1B, BMPR2 and ACVR2A, leading to the activation of SMAD1-SMAD5-SMAD8 complex. The regulation of chondrogenic differentiation is inhibited by NOG. Also involved in the induction of adipogenesis from mesenchymal stem cells. This mechanism acts through the growth factor receptors subunits BMPR1A, BMPR2 and ACVR2A and the activation of SMAD1-SMAD5-SMAD8 complex and MAPK14/p38. The polypeptide is Growth/differentiation factor 6 (Gdf6) (Mus musculus (Mouse)).